A 646-amino-acid polypeptide reads, in one-letter code: MRHIMAKSLAPTDGVRDYLAAQEKKSLLRFLTCGSVDDGKSTLIGRLLSDTKQIFEDQLAALERDSRKHGTTGDDIDFALLVDGLEAEREQGITIDVAYRFFATPKRKFIVADTPGHEQYTRNMATGASTADLAIVLIDARQGVLRQTRRHSIIASLLGIRHIVLAVNKIDLVGFDQAVFERITESYRQFSRDLGFQTIVPIPMSARYGDNVTSRSESMEWYSGPTLIEHLETVSVEEAVVELPFRFPVQYVNRPNLDFRGFAGTVASGSVAPGDEVVVAKSGKSSRVKRIVSYGGDLAQAAAGQAVTLVLDDEVEISRGNMLVSPAARPQVADQFAANIVWFDEHALLPGRSYILRTETDQTSATVTDLKYRINVNDFAHEAAKSLEMNEVGICNISTRSPIAFDTFAENRTTGAFILIDRITNATVGAGMILHSLRRAENIHWQSLDVGKRVRADMKHQRPAVFWFTGLSGSGKSTIANLFEKKLFATGRHTYILDGDNVRHGLNRDLGFTEADRVENIRRVAEVARLMADAGLIVIVSFISPFSAERRMARELMADGEFVEVFVDTPFEECARRDPKGLYARALNGEIKNFTGVDSPYEAPEKPEIHLKTLGRSAEEMVDALEHWLNERDIAQPPPADNGGSI.

A sulfate adenylyltransferase region spans residues Met1–Gln461. The tr-type G domain maps to Lys25–Val240. A G1 region spans residues Gly34–Ser41. Gly34–Ser41 contributes to the GTP binding site. The tract at residues Gly92–Asp96 is G2. Residues Asp113 to Gly116 are G3. Residues Asp113–His117 and Asn168–Asp171 contribute to the GTP site. The segment at Asn168 to Asp171 is G4. A G5 region spans residues Ser205–Arg207. The tract at residues Arg462–Ile646 is adenylyl-sulfate kinase. Gly470–Ser477 provides a ligand contact to ATP. Ser544 acts as the Phosphoserine intermediate in catalysis.

In the C-terminal section; belongs to the APS kinase family. It in the N-terminal section; belongs to the TRAFAC class translation factor GTPase superfamily. Classic translation factor GTPase family. CysN/NodQ subfamily. Sulfate-activating enzymes, NodP and NodQ, may be physically associated.

It catalyses the reaction sulfate + ATP + H(+) = adenosine 5'-phosphosulfate + diphosphate. The enzyme catalyses adenosine 5'-phosphosulfate + ATP = 3'-phosphoadenylyl sulfate + ADP + H(+). Its function is as follows. Proposed to provide activated sulfate for transfer to Nod factor. ATP sulfurylase may be the GTPase, regulating ATP sulfurylase activity. APS kinase catalyzes the synthesis of activated sulfate. This Rhizobium sp. (strain N33) protein is Bifunctional enzyme NodQ (nodQ).